Consider the following 365-residue polypeptide: Ribosomal RNA large subunit methyltransferase F (365 aa).

The disordered stretch occupies residues 1–49; sequence MSKPAVKSVQSATAKTATRAVNIRQKVKAPKQAKPEAKGRVRPSKDKPR. Residues 33–49 are compositionally biased toward basic and acidic residues; sequence AKPEAKGRVRPSKDKPR.

The protein belongs to the methyltransferase superfamily. METTL16/RlmF family.

The protein resides in the cytoplasm. It catalyses the reaction adenosine(1618) in 23S rRNA + S-adenosyl-L-methionine = N(6)-methyladenosine(1618) in 23S rRNA + S-adenosyl-L-homocysteine + H(+). Specifically methylates the adenine in position 1618 of 23S rRNA. The protein is Ribosomal RNA large subunit methyltransferase F of Shewanella baltica (strain OS185).